The sequence spans 285 residues: Non-homologous end joining protein Ku (285 aa).

The 168-residue stretch at 9 to 176 folds into the Ku domain; sequence ISFGLVNVPV…PAEIRHLEAS (168 aa). Positions 250 to 285 are disordered; it reads AMTDQKKQQNTAESETEEKPTKSTLTPRGRRKVKGA.

The protein belongs to the prokaryotic Ku family. In terms of assembly, homodimer. Interacts with LigD.

Its function is as follows. With LigD forms a non-homologous end joining (NHEJ) DNA repair enzyme, which repairs dsDNA breaks with reduced fidelity. Binds linear dsDNA with 5'- and 3'- overhangs but not closed circular dsDNA nor ssDNA. Recruits and stimulates the ligase activity of LigD. The polypeptide is Non-homologous end joining protein Ku (Desulfitobacterium hafniense (strain DSM 10664 / DCB-2)).